A 302-amino-acid chain; its full sequence is Protoheme IX farnesyltransferase (302 aa).

Helical transmembrane passes span valine 27 to histidine 47, proline 48 to leucine 68, serine 97 to leucine 117, valine 119 to tryptophan 139, isoleucine 148 to glycine 168, leucine 176 to isoleucine 196, isoleucine 219 to glycine 239, leucine 240 to alanine 260, and leucine 280 to valine 300.

It belongs to the UbiA prenyltransferase family. Protoheme IX farnesyltransferase subfamily.

Its subcellular location is the cell inner membrane. It carries out the reaction heme b + (2E,6E)-farnesyl diphosphate + H2O = Fe(II)-heme o + diphosphate. It participates in porphyrin-containing compound metabolism; heme O biosynthesis; heme O from protoheme: step 1/1. Functionally, converts heme B (protoheme IX) to heme O by substitution of the vinyl group on carbon 2 of heme B porphyrin ring with a hydroxyethyl farnesyl side group. The protein is Protoheme IX farnesyltransferase of Rhizorhabdus wittichii (strain DSM 6014 / CCUG 31198 / JCM 15750 / NBRC 105917 / EY 4224 / RW1) (Sphingomonas wittichii).